Here is a 48-residue protein sequence, read N- to C-terminus: Large ribosomal subunit protein eL40 (48 aa).

The protein belongs to the eukaryotic ribosomal protein eL40 family.

The chain is Large ribosomal subunit protein eL40 from Methanosphaerula palustris (strain ATCC BAA-1556 / DSM 19958 / E1-9c).